The primary structure comprises 530 residues: Autoinducer-2 kinase (530 aa).

Belongs to the FGGY kinase family.

It is found in the cytoplasm. It carries out the reaction (S)-4,5-dihydroxypentane-2,3-dione + ATP = (2S)-2-hydroxy-3,4-dioxopentyl phosphate + ADP + H(+). Its function is as follows. Catalyzes the phosphorylation of autoinducer-2 (AI-2) to phospho-AI-2, which subsequently inactivates the transcriptional regulator LsrR and leads to the transcription of the lsr operon. Phosphorylates the ring-open form of (S)-4,5-dihydroxypentane-2,3-dione (DPD), which is the precursor to all AI-2 signaling molecules, at the C5 position. This Escherichia coli (strain ATCC 8739 / DSM 1576 / NBRC 3972 / NCIMB 8545 / WDCM 00012 / Crooks) protein is Autoinducer-2 kinase.